Consider the following 248-residue polypeptide: Mannosylfructose-phosphate phosphatase (248 aa).

It belongs to the sucrose phosphatase family.

It catalyses the reaction beta-D-fructofuranosyl alpha-D-mannopyranoside 6(F)-phosphate + H2O = beta-D-fructofuranosyl alpha-D-mannopyranoside + phosphate. It participates in carbohydrate metabolism; mannosylfructose biosynthesis; beta-D-fructofuranosyl alpha-D-mannopyranoside from D-fructose 6-phosphate and GDP-alpha-D-mannose: step 2/2. With respect to regulation, inhibited by the phosphatase inhibitors fluoride, molybdate and orthovanadate. The sequence is that of Mannosylfructose-phosphate phosphatase from Agrobacterium fabrum (strain C58 / ATCC 33970) (Agrobacterium tumefaciens (strain C58)).